We begin with the raw amino-acid sequence, 383 residues long: tRNA-specific 2-thiouridylase MnmA (383 aa).

Residues 9–16 (GMSGGVDS) and Met-35 contribute to the ATP site. Residues 95–97 (NPD) are interaction with target base in tRNA. Cys-100 serves as the catalytic Nucleophile. Cys-100 and Cys-196 are joined by a disulfide. Gly-124 is a binding site for ATP. The tract at residues 146-148 (KDQ) is interaction with tRNA. Cys-196 functions as the Cysteine persulfide intermediate in the catalytic mechanism. The interaction with tRNA stretch occupies residues 308–309 (RY).

The protein belongs to the MnmA/TRMU family.

Its subcellular location is the cytoplasm. The catalysed reaction is S-sulfanyl-L-cysteinyl-[protein] + uridine(34) in tRNA + AH2 + ATP = 2-thiouridine(34) in tRNA + L-cysteinyl-[protein] + A + AMP + diphosphate + H(+). Its function is as follows. Catalyzes the 2-thiolation of uridine at the wobble position (U34) of tRNA, leading to the formation of s(2)U34. This chain is tRNA-specific 2-thiouridylase MnmA, found in Burkholderia pseudomallei (strain 1106a).